Consider the following 397-residue polypeptide: Acetate kinase (397 aa).

Residue Asn-8 coordinates Mg(2+). Lys-15 contributes to the ATP binding site. Arg-89 is a binding site for substrate. Asp-146 (proton donor/acceptor) is an active-site residue. ATP contacts are provided by residues 206 to 210 (HLGNG), 281 to 283 (DLR), and 329 to 333 (GVGEN). Glu-382 serves as a coordination point for Mg(2+).

This sequence belongs to the acetokinase family. In terms of assembly, homodimer. It depends on Mg(2+) as a cofactor. Mn(2+) is required as a cofactor.

The protein localises to the cytoplasm. The catalysed reaction is acetate + ATP = acetyl phosphate + ADP. The protein operates within metabolic intermediate biosynthesis; acetyl-CoA biosynthesis; acetyl-CoA from acetate: step 1/2. Its function is as follows. Catalyzes the formation of acetyl phosphate from acetate and ATP. Can also catalyze the reverse reaction. This Bacillus cereus (strain ATCC 14579 / DSM 31 / CCUG 7414 / JCM 2152 / NBRC 15305 / NCIMB 9373 / NCTC 2599 / NRRL B-3711) protein is Acetate kinase.